The sequence spans 185 residues: Ribosome-recycling factor (185 aa).

The protein belongs to the RRF family.

The protein resides in the cytoplasm. In terms of biological role, responsible for the release of ribosomes from messenger RNA at the termination of protein biosynthesis. May increase the efficiency of translation by recycling ribosomes from one round of translation to another. The protein is Ribosome-recycling factor of Brevibacillus brevis (strain 47 / JCM 6285 / NBRC 100599).